The chain runs to 466 residues: Vacuolar protein sorting-associated protein 30 (466 aa).

The tract at residues 35 to 55 (SETNTDNSDNNKHNGENDRNI) is disordered. The segment covering 43–53 (DNNKHNGENDR) has biased composition (basic and acidic residues). Positions 149-258 (DTLLEKLKEE…QMEHLSFIKD (110 aa)) form a coiled coil. Residues 279–463 (LNIYNETFRI…LAFSTSRINK (185 aa)) form a BARA region. A required for membrane-association, autophagic function during starvation and normal autophagosome morphology region spans residues 439-464 (WTTACKFLLTNIKWLLAFSTSRINKA).

Belongs to the beclin family. Component of the autophagy-specific VPS34 PI3-kinase complex I; and of the VPS34 PI3-kinase complex II.

It localises to the endosome membrane. The protein resides in the vacuole membrane. It is found in the preautophagosomal structure membrane. In terms of biological role, required for cytoplasm to vacuole transport (Cvt), autophagy, nucleophagy, and mitophagy, as a part of the autophagy-specific VPS34 PI3-kinase complex I. This complex is essential to recruit the ATG8-phosphatidylinositol conjugate and the ATG12-ATG5 conjugate to the pre-autophagosomal structure. Also involved in endosome-to-Golgi retrograde transport as part of the VPS34 PI3-kinase complex II. This chain is Vacuolar protein sorting-associated protein 30, found in Kluyveromyces marxianus (strain DMKU3-1042 / BCC 29191 / NBRC 104275) (Yeast).